Consider the following 834-residue polypeptide: Serine/threonine-protein kinase TNNI3K (834 aa).

The N-myristoyl glycine moiety is linked to residue Gly-2. Residues 21–49 (SESYAIIIERLEDDLQIKENEFQELRHIF) adopt a coiled-coil conformation. 10 ANK repeats span residues 66–96 (RGLS…RPSR), 100–129 (NGFP…DVQQ), 133–162 (GGLT…NVNV), 166–195 (VFFT…DVNV), 199–229 (VGDR…DVNA), 233–262 (EDHV…EVQP), 268–297 (YGDT…TESL), 303–334 (FSET…NINH), 338–367 (DGHT…DMNL), and 380–409 (DEQT…PQDE). Residues 462–722 (IEFHEIIGSG…EVVRKLEECL (261 aa)) enclose the Protein kinase domain. ATP contacts are provided by residues 468–476 (IGSGSFGKV) and Lys-489. Residue Asp-587 is the Proton acceptor of the active site. Positions 815 to 834 (PMSPMHLHSRRNSGSFEDGN) are disordered.

Belongs to the protein kinase superfamily. TKL Ser/Thr protein kinase family. MAP kinase kinase kinase subfamily. In terms of assembly, interacts with TNNI3, ACTC, ACTA1, MYBPC3, AIP, FABP3 and HADHB. The cofactor is Mg(2+). Autophosphorylated.

Its subcellular location is the nucleus. The protein localises to the cytoplasm. It carries out the reaction L-seryl-[protein] + ATP = O-phospho-L-seryl-[protein] + ADP + H(+). It catalyses the reaction L-threonyl-[protein] + ATP = O-phospho-L-threonyl-[protein] + ADP + H(+). Its function is as follows. May play a role in cardiac physiology. The sequence is that of Serine/threonine-protein kinase TNNI3K from Mus musculus (Mouse).